A 413-amino-acid chain; its full sequence is Phosphopentomutase (413 aa).

Mn(2+) contacts are provided by Asp-11, Asp-306, His-311, Asp-347, His-348, and His-359.

This sequence belongs to the phosphopentomutase family. Mn(2+) serves as cofactor.

The protein resides in the cytoplasm. The catalysed reaction is 2-deoxy-alpha-D-ribose 1-phosphate = 2-deoxy-D-ribose 5-phosphate. It catalyses the reaction alpha-D-ribose 1-phosphate = D-ribose 5-phosphate. The protein operates within carbohydrate degradation; 2-deoxy-D-ribose 1-phosphate degradation; D-glyceraldehyde 3-phosphate and acetaldehyde from 2-deoxy-alpha-D-ribose 1-phosphate: step 1/2. Its function is as follows. Isomerase that catalyzes the conversion of deoxy-ribose 1-phosphate (dRib-1-P) and ribose 1-phosphate (Rib-1-P) to deoxy-ribose 5-phosphate (dRib-5-P) and ribose 5-phosphate (Rib-5-P), respectively. This Helicobacter pylori (strain Shi470) protein is Phosphopentomutase.